Here is a 239-residue protein sequence, read N- to C-terminus: Pyridoxine 5'-phosphate synthase (239 aa).

N7 serves as a coordination point for 3-amino-2-oxopropyl phosphate. 9–10 (DH) provides a ligand contact to 1-deoxy-D-xylulose 5-phosphate. R18 contributes to the 3-amino-2-oxopropyl phosphate binding site. H43 functions as the Proton acceptor in the catalytic mechanism. The 1-deoxy-D-xylulose 5-phosphate site is built by R45 and H50. E70 (proton acceptor) is an active-site residue. T100 serves as a coordination point for 1-deoxy-D-xylulose 5-phosphate. H191 acts as the Proton donor in catalysis. Residues G192 and 213–214 (GH) each bind 3-amino-2-oxopropyl phosphate.

Belongs to the PNP synthase family. In terms of assembly, homooctamer; tetramer of dimers.

Its subcellular location is the cytoplasm. It catalyses the reaction 3-amino-2-oxopropyl phosphate + 1-deoxy-D-xylulose 5-phosphate = pyridoxine 5'-phosphate + phosphate + 2 H2O + H(+). It functions in the pathway cofactor biosynthesis; pyridoxine 5'-phosphate biosynthesis; pyridoxine 5'-phosphate from D-erythrose 4-phosphate: step 5/5. Functionally, catalyzes the complicated ring closure reaction between the two acyclic compounds 1-deoxy-D-xylulose-5-phosphate (DXP) and 3-amino-2-oxopropyl phosphate (1-amino-acetone-3-phosphate or AAP) to form pyridoxine 5'-phosphate (PNP) and inorganic phosphate. The polypeptide is Pyridoxine 5'-phosphate synthase (Desulforapulum autotrophicum (strain ATCC 43914 / DSM 3382 / VKM B-1955 / HRM2) (Desulfobacterium autotrophicum)).